A 249-amino-acid polypeptide reads, in one-letter code: uncharacterized protein (249 aa).

2 helical membrane passes run 49-69 (ILLS…CYLL) and 223-243 (IVMS…VHHL).

The protein resides in the cell membrane. This is an uncharacterized protein from Bacillus anthracis.